We begin with the raw amino-acid sequence, 90 residues long: Lantipeptide prochlorosin 1.7 (90 aa).

A propeptide spanning residues 1-68 is cleaved from the precursor; it reads MSEEQLKAFI…DAELEGVAGG (68 aa). 2 positions are modified to 2,3-didehydrobutyrine: Thr-69 and Thr-73. Positions 76–79 form a cross-link, lanthionine (Ser-Cys); it reads SITC. 2 consecutive cross-links (beta-methyllanthionine (Thr-Cys)) follow at residues 78-82 and 81-90; these read TCETC and TCDLLVGKMC.

Cross-links are proved in vitro, when coepressed in E.coli with the ProcM lanthionine synthetase. In terms of processing, the lanthionine residue has a DL configuration (with 2S,6R stereochemistry), whereas the beta-methyllanthionine residues have a DL configuration (with 2S,3S,6R stereochemistry). Post-translationally, maturation of prochlorosin involves the enzymatic conversion of Thr, and Ser into dehydrated AA and the formation of thioether bonds with cysteines. This is followed by membrane translocation and cleavage of the modified precursor.

It is found in the secreted. Its function is as follows. Lanthionine-containing peptide (lantipeptide) with unknown function. Does not show antibiotic activity against Lactococcus lactis 117 and Bacillus subtilis 6633 bacteria. Organisms that produce this peptide live in oligotrophic environments at very dilute concentrations, suggesting this peptide is not secreted to influence other bacteria. The polypeptide is Lantipeptide prochlorosin 1.7 (Prochlorococcus marinus (strain MIT 9313)).